Here is a 77-residue protein sequence, read N- to C-terminus: Ubiquitin-like protein NEDD8 (77 aa).

Residues 70–72 (VLA) are interaction with uba-3. Gly76 participates in a covalent cross-link: Glycyl lysine isopeptide (Gly-Lys) (interchain with K-? in acceptor proteins). A propeptide is located at residue Phe77.

This sequence belongs to the ubiquitin family. Interacts with dcn-1. Covalently attached to cullins. May interact with atx-3. Post-translationally, cleavage of precursor form is necessary for function.

It is found in the nucleus. The protein localises to the cytoplasm. Functionally, ubiquitin-like protein which plays an important role in cell cycle control and embryogenesis. Covalent attachment to its substrates requires prior activation by the E1 complex uba-3-ula-1 and linkage to the E2 enzyme ubc-12. Attachment of ned-8 to cullins activates their associated E3 ubiquitin ligase activity, and thus promotes polyubiquitination and proteasomal degradation of cyclins and other regulatory proteins. The chain is Ubiquitin-like protein NEDD8 (ned-8) from Caenorhabditis elegans.